The following is a 667-amino-acid chain: Serine/threonine-protein kinase BUR1 (667 aa).

The region spanning 60-378 (YKEEEKLGQG…AMSAMKHPFF (319 aa)) is the Protein kinase domain. ATP contacts are provided by residues 66–74 (LGQGTFGEV) and Lys89. Residue Asp207 is the Proton acceptor of the active site. Positions 408-667 (HEAMSQKGPS…SEQKDIADLY (260 aa)) are disordered. The span at 432–443 (KFEKKSGIKREQ) shows a compositional bias: basic and acidic residues. Residues 494–516 (NNHSGSLRNRITPSNMGTHSNPR) show a composition bias toward polar residues. A compositionally biased stretch (low complexity) spans 541–556 (YNRGYSSSVNSRYNNR). Polar residues-rich tracts occupy residues 582 to 594 (DNNQSQTRLQGHS), 602 to 611 (SKYNSTQTNI), and 622 to 632 (NEYNASKLGSQ). The segment covering 633 to 667 (DTKKNDYPKHSETQKQQNNEEKKIHSEQKDIADLY) has biased composition (basic and acidic residues).

This sequence belongs to the protein kinase superfamily. CMGC Ser/Thr protein kinase family. CDC2/CDKX subfamily.

The protein resides in the nucleus. The catalysed reaction is L-seryl-[protein] + ATP = O-phospho-L-seryl-[protein] + ADP + H(+). It catalyses the reaction L-threonyl-[protein] + ATP = O-phospho-L-threonyl-[protein] + ADP + H(+). The enzyme catalyses [DNA-directed RNA polymerase] + ATP = phospho-[DNA-directed RNA polymerase] + ADP + H(+). Functionally, serine/threonine-protein kinase involved in transcription regulation. Phosphorylates the UBC2/RAD6 ubiquitin-conjugating enzyme (E2), leading to monoubiquitination of histone H2B and the silencing of telomeric-associated genes. Also required for histone H3 methylation. Necessary for the recovery from pheromone-induced growth arrest in the cell cycle G1 phase. This is Serine/threonine-protein kinase BUR1 (BUR1) from Candida glabrata (strain ATCC 2001 / BCRC 20586 / JCM 3761 / NBRC 0622 / NRRL Y-65 / CBS 138) (Yeast).